The chain runs to 145 residues: Flagellar assembly factor FliW (145 aa).

The protein belongs to the FliW family. As to quaternary structure, interacts with translational regulator CsrA and flagellin(s).

It localises to the cytoplasm. Functionally, acts as an anti-CsrA protein, binds CsrA and prevents it from repressing translation of its target genes, one of which is flagellin. Binds to flagellin and participates in the assembly of the flagellum. This is Flagellar assembly factor FliW from Clostridium kluyveri (strain NBRC 12016).